Consider the following 176-residue polypeptide: NAD(P)H-quinone oxidoreductase subunit 6, chloroplastic (176 aa).

The next 5 membrane-spanning stretches (helical) occupy residues 10 to 30 (FLLV…ILFT), 33 to 53 (IFSA…YIIA), 61 to 81 (AQLL…VMFI), 92 to 112 (LFTL…FLLI), and 152 to 172 (FFPP…GAIA).

The protein belongs to the complex I subunit 6 family. As to quaternary structure, NDH is composed of at least 16 different subunits, 5 of which are encoded in the nucleus.

The protein localises to the plastid. Its subcellular location is the chloroplast thylakoid membrane. It catalyses the reaction a plastoquinone + NADH + (n+1) H(+)(in) = a plastoquinol + NAD(+) + n H(+)(out). The enzyme catalyses a plastoquinone + NADPH + (n+1) H(+)(in) = a plastoquinol + NADP(+) + n H(+)(out). NDH shuttles electrons from NAD(P)H:plastoquinone, via FMN and iron-sulfur (Fe-S) centers, to quinones in the photosynthetic chain and possibly in a chloroplast respiratory chain. The immediate electron acceptor for the enzyme in this species is believed to be plastoquinone. Couples the redox reaction to proton translocation, and thus conserves the redox energy in a proton gradient. In Fagopyrum esculentum subsp. ancestrale (Wild buckwheat), this protein is NAD(P)H-quinone oxidoreductase subunit 6, chloroplastic (ndhG).